The chain runs to 227 residues: Ribonuclease 3 (227 aa).

The region spanning 6 to 128 (ASDYQQRIGY…VIAAIYLDAD (123 aa)) is the RNase III domain. E41 provides a ligand contact to Mg(2+). The active site involves D45. Positions 114 and 117 each coordinate Mg(2+). E117 is an active-site residue. Residues 155 to 225 (DPKTRLQEWL…ASHAINQLDS (71 aa)) form the DRBM domain. Residues 203 to 212 (GEGSSRRLAE) show a composition bias toward basic and acidic residues. The interval 203-227 (GEGSSRRLAEQDAASHAINQLDSNK) is disordered.

The protein belongs to the ribonuclease III family. As to quaternary structure, homodimer. It depends on Mg(2+) as a cofactor.

The protein localises to the cytoplasm. The catalysed reaction is Endonucleolytic cleavage to 5'-phosphomonoester.. In terms of biological role, digests double-stranded RNA. Involved in the processing of primary rRNA transcript to yield the immediate precursors to the large and small rRNAs (23S and 16S). Processes some mRNAs, and tRNAs when they are encoded in the rRNA operon. Processes pre-crRNA and tracrRNA of type II CRISPR loci if present in the organism. The chain is Ribonuclease 3 from Xylella fastidiosa (strain M12).